Reading from the N-terminus, the 558-residue chain is Nuclear speckle splicing regulatory protein 1 (558 aa).

The interval 21–54 (PVLQKPSVFGNDSDDDDETSVSESLQREAAKKQA) is disordered. Residues S27 and S33 each carry the phosphoserine modification. Residues 104–170 (IHNLLKAVEI…REKRAAALEA (67 aa)) are a coiled coil. A necessary for alternative splicing activity region spans residues 106–170 (NLLKAVEIRK…REKRAAALEA (65 aa)). Glycyl lysine isopeptide (Lys-Gly) (interchain with G-Cter in SUMO2) cross-links involve residues K199 and K210. The span at 204 to 215 (EARSGIKEEKSR) shows a compositional bias: basic and acidic residues. The segment at 204-534 (EARSGIKEEK…KRNNEETVMS (331 aa)) is disordered. The segment covering 216-226 (GFSNEVSSKNR) has biased composition (polar residues). S248, S254, and S255 each carry phosphoserine. The segment covering 250–280 (FDAKSSADDEIEETRVNCRREKVIETPENDF) has biased composition (basic and acidic residues). Position 275 is a phosphothreonine (T275). A Glycyl lysine isopeptide (Lys-Gly) (interchain with G-Cter in SUMO2) cross-link involves residue K281. Basic residues predominate over residues 299–310 (STRHHTKGSRTS). 3 stretches are compositionally biased toward basic and acidic residues: residues 311–442 (RGHE…KREV), 449–487 (RNQD…RNQE), and 501–517 (RLTE…ERPP). The stretch at 379–427 (KREKDREKYSQREQERDRQQNDQNRPSEKGEKEEKSKAKEEHMKVRKER) forms a coiled coil. S457 bears the Phosphoserine mark.

It belongs to the NSRP1 family. Interacts (via C-terminus) with SRSF1. Interacts (via C-terminus) with SRSF2. As to expression, expressed in dendritic cells, T-cells, B-cells and natural killer cells. Expressed in secondary lymphoid organs such as spleen and mesenteric, axillary and brachial lymph nodes.

The protein localises to the nucleus. Its subcellular location is the nucleus speckle. In terms of biological role, RNA-binding protein that mediates pre-mRNA alternative splicing regulation. In Homo sapiens (Human), this protein is Nuclear speckle splicing regulatory protein 1 (NSRP1).